The following is a 403-amino-acid chain: Cytoplasmic tRNA 2-thiolation protein 2 (403 aa).

It belongs to the CTU2/NCS2 family.

It is found in the cytoplasm. It participates in tRNA modification; 5-methoxycarbonylmethyl-2-thiouridine-tRNA biosynthesis. Plays a central role in 2-thiolation of mcm(5)S(2)U at tRNA wobble positions of tRNA(Lys), tRNA(Glu) and tRNA(Gln). May act by forming a heterodimer with NCS6/CTU1 that ligates sulfur from thiocarboxylated URM1 onto the uridine of tRNAs at wobble position. The polypeptide is Cytoplasmic tRNA 2-thiolation protein 2 (Drosophila ananassae (Fruit fly)).